We begin with the raw amino-acid sequence, 542 residues long: Chaperonin GroEL 1 (542 aa).

ATP-binding positions include 29-32 (TIGP), 86-90 (DGTTT), Gly-414, 479-481 (DAL), and Asp-495.

This sequence belongs to the chaperonin (HSP60) family. In terms of assembly, forms a cylinder of 14 subunits composed of two heptameric rings stacked back-to-back. Interacts with the co-chaperonin GroES.

The protein localises to the cytoplasm. It carries out the reaction ATP + H2O + a folded polypeptide = ADP + phosphate + an unfolded polypeptide.. Functionally, together with its co-chaperonin GroES, plays an essential role in assisting protein folding. The GroEL-GroES system forms a nano-cage that allows encapsulation of the non-native substrate proteins and provides a physical environment optimized to promote and accelerate protein folding. The chain is Chaperonin GroEL 1 from Synechococcus sp. (strain JA-3-3Ab) (Cyanobacteria bacterium Yellowstone A-Prime).